A 130-amino-acid chain; its full sequence is Aspartate 1-decarboxylase (130 aa).

Residue Ser-25 is the Schiff-base intermediate with substrate; via pyruvic acid of the active site. Ser-25 carries the pyruvic acid (Ser) modification. Thr-57 contacts substrate. The Proton donor role is filled by Tyr-58. Residue 73-75 participates in substrate binding; the sequence is GAA.

This sequence belongs to the PanD family. Heterooctamer of four alpha and four beta subunits. Pyruvate is required as a cofactor. Is synthesized initially as an inactive proenzyme, which is activated by self-cleavage at a specific serine bond to produce a beta-subunit with a hydroxyl group at its C-terminus and an alpha-subunit with a pyruvoyl group at its N-terminus.

Its subcellular location is the cytoplasm. The enzyme catalyses L-aspartate + H(+) = beta-alanine + CO2. Its pathway is cofactor biosynthesis; (R)-pantothenate biosynthesis; beta-alanine from L-aspartate: step 1/1. Its function is as follows. Catalyzes the pyruvoyl-dependent decarboxylation of aspartate to produce beta-alanine. This chain is Aspartate 1-decarboxylase, found in Myxococcus xanthus (strain DK1622).